The primary structure comprises 299 residues: GTP cyclohydrolase FolE2 (299 aa).

It belongs to the GTP cyclohydrolase IV family.

It carries out the reaction GTP + H2O = 7,8-dihydroneopterin 3'-triphosphate + formate + H(+). It functions in the pathway cofactor biosynthesis; 7,8-dihydroneopterin triphosphate biosynthesis; 7,8-dihydroneopterin triphosphate from GTP: step 1/1. Functionally, converts GTP to 7,8-dihydroneopterin triphosphate. In Klebsiella pneumoniae, this protein is GTP cyclohydrolase FolE2.